A 649-amino-acid chain; its full sequence is Endoglucanase D (649 aa).

The signal sequence occupies residues 1 to 41 (MSRMTLKSSMKKRVLSLLIAVVFLSLTGVFPSGLIETKVSA). Catalysis depends on D201, which acts as the Nucleophile. Residues H516 and D546 contribute to the active site. E555 acts as the Proton donor in catalysis. The 71-residue stretch at 579-649 (NEVLYGDVND…LIRVIEKLPI (71 aa)) folds into the Dockerin domain.

The protein belongs to the glycosyl hydrolase 9 (cellulase E) family. Ca(2+) is required as a cofactor.

The enzyme catalyses Endohydrolysis of (1-&gt;4)-beta-D-glucosidic linkages in cellulose, lichenin and cereal beta-D-glucans.. In terms of biological role, this enzyme catalyzes the endohydrolysis of 1,4-beta-glucosidic linkages in cellulose, lichenin and cereal beta-D-glucans. This Acetivibrio thermocellus (strain ATCC 27405 / DSM 1237 / JCM 9322 / NBRC 103400 / NCIMB 10682 / NRRL B-4536 / VPI 7372) (Clostridium thermocellum) protein is Endoglucanase D (celD).